The sequence spans 291 residues: Protease HtpX homolog (291 aa).

2 helical membrane passes run 4–24 (IVLF…SARL) and 38–58 (MGML…ISLM). A Zn(2+)-binding site is contributed by His-144. Glu-145 is an active-site residue. His-148 provides a ligand contact to Zn(2+). 2 consecutive transmembrane segments (helical) span residues 152-172 (GDMV…IFLA) and 199-219 (VSSI…VMFF). Glu-224 contacts Zn(2+).

The protein belongs to the peptidase M48B family. Zn(2+) is required as a cofactor.

It localises to the cell inner membrane. This is Protease HtpX homolog from Prosthecochloris aestuarii (strain DSM 271 / SK 413).